A 238-amino-acid polypeptide reads, in one-letter code: Cysteine-rich venom protein 2 (238 aa).

The N-terminal stretch at 1-19 is a signal peptide; it reads MIAFIVLLSLAAVLQQSSG. The SCP domain maps to 38-164; the sequence is VDKHNALRRS…STKYLYVCQY (127 aa). Disulfide bonds link cysteine 75–cysteine 153, cysteine 92–cysteine 165, cysteine 148–cysteine 162, cysteine 184–cysteine 191, cysteine 187–cysteine 196, cysteine 200–cysteine 233, cysteine 209–cysteine 227, and cysteine 218–cysteine 231. A ShKT domain is found at 200–233; the sequence is CEYEDAYTNCNDLVKERKCQTEWIKSQCPATCFC.

It belongs to the CRISP family. As to expression, expressed by the venom gland.

It localises to the secreted. In terms of biological role, blocks contraction of smooth muscle elicited by high potassium-induced depolarization, but does not block caffeine-stimulated contraction. May target voltage-gated calcium channels (Cav) on smooth muscle. The sequence is that of Cysteine-rich venom protein 2 from Hydrophis hardwickii (Hardwick's spine-bellied seasnake).